Consider the following 339-residue polypeptide: MASSPPIYNLEQYGTNCSEEYSNFYENSKYWIQCLWLIPTLFLLVWIIITTRVRYPSQYSNLPYWILTADCVVSIILILLDLFVVRLFLYFPQLCSKFSTIFINYPIISDIYFPIYNYARVFKTGSQCGMILSRLFCVLIPFGHDEKLRRHIPLFLTIICILPILVVWNTVISEKEVVFWYGGFFVIYHRRVGWVSLSKLHLTFIFVSISFILISSLLLMRHLPIESAVNAERRVITNSIFIIVAFFFQAAFQSFYAFFRYTDWYPRFLVDFQFIIYDVMTVGYPLIFLNFAKEFRNHVFLKSNRKGRTLMELRSMSKPFNNTMPRQESPSPNYDSILA.

Transmembrane regions (helical) follow at residues 30-50, 65-85, 98-118, 152-172, 200-220, 239-259, and 268-288; these read YWIQCLWLIPTLFLLVWIIIT, WILTADCVVSIILILLDLFVV, FSTIFINYPIISDIYFPIYNY, IPLFLTIICILPILVVWNTVI, LHLTFIFVSISFILISSLLLM, SIFIIVAFFFQAAFQSFYAFF, and FLVDFQFIIYDVMTVGYPLIF. The interval 319–339 is disordered; it reads PFNNTMPRQESPSPNYDSILA.

The protein belongs to the nematode receptor-like protein srg family.

The protein localises to the membrane. This chain is Serpentine receptor class gamma-7 (srg-7), found in Caenorhabditis elegans.